Consider the following 203-residue polypeptide: Na(+)-translocating NADH-quinone reductase subunit E (203 aa).

The next 6 membrane-spanning stretches (helical) occupy residues 12–32, 36–56, 82–102, 115–135, 145–165, and 181–201; these read AVFVENMALAFFLGMCTFLAL, MEAAIGLGIAVVVVLSVTVPV, FLGLLTYIGVIAAIVQILEMV, GVFLPLITVNCAIMGASLFMV, LVYGFGAGLGWALAIIALAGI, and LGITFITVGLMSLGFMSFSGI.

The protein belongs to the NqrDE/RnfAE family. Composed of six subunits; NqrA, NqrB, NqrC, NqrD, NqrE and NqrF.

Its subcellular location is the cell inner membrane. It carries out the reaction a ubiquinone + n Na(+)(in) + NADH + H(+) = a ubiquinol + n Na(+)(out) + NAD(+). In terms of biological role, NQR complex catalyzes the reduction of ubiquinone-1 to ubiquinol by two successive reactions, coupled with the transport of Na(+) ions from the cytoplasm to the periplasm. NqrA to NqrE are probably involved in the second step, the conversion of ubisemiquinone to ubiquinol. The polypeptide is Na(+)-translocating NADH-quinone reductase subunit E (Hahella chejuensis (strain KCTC 2396)).